Here is an 88-residue protein sequence, read N- to C-terminus: Small ribosomal subunit protein uS17 (88 aa).

The protein belongs to the universal ribosomal protein uS17 family. As to quaternary structure, part of the 30S ribosomal subunit.

Its function is as follows. One of the primary rRNA binding proteins, it binds specifically to the 5'-end of 16S ribosomal RNA. The chain is Small ribosomal subunit protein uS17 from Dechloromonas aromatica (strain RCB).